The following is a 98-amino-acid chain: Protein translation factor SUI1 homolog (98 aa).

The protein belongs to the SUI1 family.

In Pyrococcus abyssi (strain GE5 / Orsay), this protein is Protein translation factor SUI1 homolog.